The sequence spans 132 residues: uncharacterized protein (132 aa).

This is an uncharacterized protein from Sinorhizobium fredii (strain NBRC 101917 / NGR234).